Here is a 217-residue protein sequence, read N- to C-terminus: Protein-L-isoaspartate O-methyltransferase (217 aa).

Residue Ser-62 is part of the active site.

This sequence belongs to the methyltransferase superfamily. L-isoaspartyl/D-aspartyl protein methyltransferase family.

It localises to the cytoplasm. The catalysed reaction is [protein]-L-isoaspartate + S-adenosyl-L-methionine = [protein]-L-isoaspartate alpha-methyl ester + S-adenosyl-L-homocysteine. In terms of biological role, catalyzes the methyl esterification of L-isoaspartyl residues in peptides and proteins that result from spontaneous decomposition of normal L-aspartyl and L-asparaginyl residues. It plays a role in the repair and/or degradation of damaged proteins. The polypeptide is Protein-L-isoaspartate O-methyltransferase (Trichlorobacter lovleyi (strain ATCC BAA-1151 / DSM 17278 / SZ) (Geobacter lovleyi)).